A 351-amino-acid polypeptide reads, in one-letter code: S-adenosylmethionine:tRNA ribosyltransferase-isomerase (351 aa).

The protein belongs to the QueA family. As to quaternary structure, monomer.

The protein localises to the cytoplasm. It catalyses the reaction 7-aminomethyl-7-carbaguanosine(34) in tRNA + S-adenosyl-L-methionine = epoxyqueuosine(34) in tRNA + adenine + L-methionine + 2 H(+). It functions in the pathway tRNA modification; tRNA-queuosine biosynthesis. Transfers and isomerizes the ribose moiety from AdoMet to the 7-aminomethyl group of 7-deazaguanine (preQ1-tRNA) to give epoxyqueuosine (oQ-tRNA). The protein is S-adenosylmethionine:tRNA ribosyltransferase-isomerase of Photobacterium profundum (strain SS9).